Here is a 70-residue protein sequence, read N- to C-terminus: Putative membrane protein insertion efficiency factor (70 aa).

Belongs to the UPF0161 family.

Its subcellular location is the cell inner membrane. Could be involved in insertion of integral membrane proteins into the membrane. This chain is Putative membrane protein insertion efficiency factor, found in Rhizorhabdus wittichii (strain DSM 6014 / CCUG 31198 / JCM 15750 / NBRC 105917 / EY 4224 / RW1) (Sphingomonas wittichii).